The following is an 81-amino-acid chain: Photosystem I iron-sulfur center (81 aa).

2 consecutive 4Fe-4S ferredoxin-type domains span residues 1–31 and 39–68; these read MSHK…MVPW and IASS…IRVY. Residues Cys-11, Cys-14, Cys-17, Cys-21, Cys-48, Cys-51, Cys-54, and Cys-58 each contribute to the [4Fe-4S] cluster site.

In terms of assembly, the cyanobacterial PSI reaction center is composed of one copy each of PsaA,B,C,D,E,F,I,J,K,L,M and X, and forms trimeric complexes. [4Fe-4S] cluster is required as a cofactor.

It localises to the cellular thylakoid membrane. The enzyme catalyses reduced [plastocyanin] + hnu + oxidized [2Fe-2S]-[ferredoxin] = oxidized [plastocyanin] + reduced [2Fe-2S]-[ferredoxin]. Apoprotein for the two 4Fe-4S centers FA and FB of photosystem I (PSI); essential for photochemical activity. FB is the terminal electron acceptor of PSI, donating electrons to ferredoxin. The C-terminus interacts with PsaA/B/D and helps assemble the protein into the PSI complex. Required for binding of PsaD and PsaE to PSI. PSI is a plastocyanin/cytochrome c6-ferredoxin oxidoreductase, converting photonic excitation into a charge separation, which transfers an electron from the donor P700 chlorophyll pair to the spectroscopically characterized acceptors A0, A1, FX, FA and FB in turn. In Crocosphaera subtropica (strain ATCC 51142 / BH68) (Cyanothece sp. (strain ATCC 51142)), this protein is Photosystem I iron-sulfur center.